A 567-amino-acid polypeptide reads, in one-letter code: Glutamine-dependent NAD(+) synthetase (567 aa).

A CN hydrolase domain is found at 2 to 242; sequence LNLTLAQLNF…EDILTVTLDL (241 aa). E41 acts as the Proton acceptor; for glutaminase activity in catalysis. K109 (for glutaminase activity) is an active-site residue. Y115 serves as a coordination point for L-glutamine. The Nucleophile; for glutaminase activity role is filled by C145. Positions 172 and 178 each coordinate L-glutamine. Positions 287–567 are ligase; sequence PKEEEEIYAA…RMPVTNKFFK (281 aa). 316–323 serves as a coordination point for ATP; the sequence is GLSGGIDS. Deamido-NAD(+) is bound at residue N399. Position 423 (T423) interacts with ATP. Residues E428 and K538 each coordinate deamido-NAD(+).

It in the C-terminal section; belongs to the NAD synthetase family.

It catalyses the reaction deamido-NAD(+) + L-glutamine + ATP + H2O = L-glutamate + AMP + diphosphate + NAD(+) + H(+). Its pathway is cofactor biosynthesis; NAD(+) biosynthesis; NAD(+) from deamido-NAD(+) (L-Gln route): step 1/1. In terms of biological role, catalyzes the ATP-dependent amidation of deamido-NAD to form NAD. Uses L-glutamine as a nitrogen source. This is Glutamine-dependent NAD(+) synthetase from Aquifex aeolicus (strain VF5).